The following is a 1168-amino-acid chain: DNA-directed RNA polymerase subunit beta (1168 aa).

This sequence belongs to the RNA polymerase beta chain family. The RNAP catalytic core consists of 2 alpha, 1 beta, 1 beta' and 1 omega subunit. When a sigma factor is associated with the core the holoenzyme is formed, which can initiate transcription.

The enzyme catalyses RNA(n) + a ribonucleoside 5'-triphosphate = RNA(n+1) + diphosphate. DNA-dependent RNA polymerase catalyzes the transcription of DNA into RNA using the four ribonucleoside triphosphates as substrates. The chain is DNA-directed RNA polymerase subunit beta from Corynebacterium kroppenstedtii (strain DSM 44385 / JCM 11950 / CIP 105744 / CCUG 35717).